The chain runs to 246 residues: Acetylglutamate kinase (246 aa).

Substrate contacts are provided by residues 30 to 31 (GG), Arg52, and Asn151.

This sequence belongs to the acetylglutamate kinase family. ArgB subfamily.

The protein resides in the cytoplasm. The catalysed reaction is N-acetyl-L-glutamate + ATP = N-acetyl-L-glutamyl 5-phosphate + ADP. It functions in the pathway amino-acid biosynthesis; L-arginine biosynthesis; N(2)-acetyl-L-ornithine from L-glutamate: step 2/4. In terms of biological role, catalyzes the ATP-dependent phosphorylation of N-acetyl-L-glutamate. The sequence is that of Acetylglutamate kinase from Methanopyrus kandleri (strain AV19 / DSM 6324 / JCM 9639 / NBRC 100938).